We begin with the raw amino-acid sequence, 319 residues long: Homoserine dehydrogenase (319 aa).

Positions 10, 12, 13, 40, 57, 92, 93, 114, and 116 each coordinate NADPH. Val-13 is a binding site for NAD(+). The NADP(+) site is built by Val-13 and Arg-40. Residue Ser-92 coordinates NAD(+). Ser-92 serves as a coordination point for NADP(+). NADP(+) is bound by residues Ser-114 and Lys-116. Positions 140, 143, 145, and 147 each coordinate Na(+). Gly-197 and Glu-200 together coordinate NADP(+). L-homoserine is bound by residues Glu-200 and Asp-211. Residue Lys-215 is the Proton donor of the active site. NADPH is bound at residue Gly-296. Residue Gly-296 coordinates NAD(+). Gly-296 serves as a coordination point for NADP(+).

It belongs to the homoserine dehydrogenase family. Homodimer. A metal cation is required as a cofactor.

It catalyses the reaction L-homoserine + NAD(+) = L-aspartate 4-semialdehyde + NADH + H(+). It functions in the pathway amino-acid biosynthesis; L-methionine biosynthesis via de novo pathway; L-homoserine from L-aspartate: step 3/3. It participates in amino-acid biosynthesis; L-threonine biosynthesis; L-threonine from L-aspartate: step 3/5. Catalyzes the conversion of L-aspartate-beta-semialdehyde (L-Asa) to L-homoserine (L-Hse), the third step in the biosynthesis of threonine and methionine from aspartate. Utilizes NADH but not NADPH as coenzyme. This chain is Homoserine dehydrogenase, found in Pyrococcus horikoshii (strain ATCC 700860 / DSM 12428 / JCM 9974 / NBRC 100139 / OT-3).